The primary structure comprises 204 residues: Large ribosomal subunit protein eL15z (204 aa).

It belongs to the eukaryotic ribosomal protein eL15 family.

The protein is Large ribosomal subunit protein eL15z (SB61) of Picea mariana (Black spruce).